The primary structure comprises 154 residues: 6,7-dimethyl-8-ribityllumazine synthase (154 aa).

5-amino-6-(D-ribitylamino)uracil is bound by residues F22, 56–58 (AFE), and 80–82 (AVI). 85–86 (AT) contacts (2S)-2-hydroxy-3-oxobutyl phosphate. H88 (proton donor) is an active-site residue. F113 lines the 5-amino-6-(D-ribitylamino)uracil pocket. R127 provides a ligand contact to (2S)-2-hydroxy-3-oxobutyl phosphate.

It belongs to the DMRL synthase family. Forms an icosahedral capsid composed of 60 subunits, arranged as a dodecamer of pentamers.

The enzyme catalyses (2S)-2-hydroxy-3-oxobutyl phosphate + 5-amino-6-(D-ribitylamino)uracil = 6,7-dimethyl-8-(1-D-ribityl)lumazine + phosphate + 2 H2O + H(+). It participates in cofactor biosynthesis; riboflavin biosynthesis; riboflavin from 2-hydroxy-3-oxobutyl phosphate and 5-amino-6-(D-ribitylamino)uracil: step 1/2. Its function is as follows. Catalyzes the formation of 6,7-dimethyl-8-ribityllumazine by condensation of 5-amino-6-(D-ribitylamino)uracil with 3,4-dihydroxy-2-butanone 4-phosphate. This is the penultimate step in the biosynthesis of riboflavin. This is 6,7-dimethyl-8-ribityllumazine synthase from Geobacillus kaustophilus (strain HTA426).